The chain runs to 327 residues: 4-hydroxythreonine-4-phosphate dehydrogenase (327 aa).

2 residues coordinate substrate: H134 and T135. A divalent metal cation-binding residues include H164, H209, and H264. Residues K272, N281, and R290 each contribute to the substrate site.

It belongs to the PdxA family. As to quaternary structure, homodimer. Zn(2+) is required as a cofactor. The cofactor is Mg(2+). Requires Co(2+) as cofactor.

It is found in the cytoplasm. It catalyses the reaction 4-(phosphooxy)-L-threonine + NAD(+) = 3-amino-2-oxopropyl phosphate + CO2 + NADH. The protein operates within cofactor biosynthesis; pyridoxine 5'-phosphate biosynthesis; pyridoxine 5'-phosphate from D-erythrose 4-phosphate: step 4/5. Its function is as follows. Catalyzes the NAD(P)-dependent oxidation of 4-(phosphooxy)-L-threonine (HTP) into 2-amino-3-oxo-4-(phosphooxy)butyric acid which spontaneously decarboxylates to form 3-amino-2-oxopropyl phosphate (AHAP). In Shewanella frigidimarina (strain NCIMB 400), this protein is 4-hydroxythreonine-4-phosphate dehydrogenase.